The chain runs to 432 residues: Putative D-alanyl-D-alanine carboxypeptidase (432 aa).

A helical; Signal-anchor membrane pass occupies residues 7–25; sequence ATVLLTFSLSAFAVEYPVL.

It belongs to the peptidase S12 family. YfeW subfamily.

It is found in the cell inner membrane. The catalysed reaction is Preferential cleavage: (Ac)2-L-Lys-D-Ala-|-D-Ala. Also transpeptidation of peptidyl-alanyl moieties that are N-acyl substituents of D-alanine.. In Salmonella agona (strain SL483), this protein is Putative D-alanyl-D-alanine carboxypeptidase.